We begin with the raw amino-acid sequence, 913 residues long: MASESDTEEFYDAPEDVHLGGGYPVGSPGKVGLSTFKETENTAYKVGNESPVQELKQDVSKKIIESIIEESQKVLQLEDDSLDSKGKELSDQATASPIVARTDLSNIPGLLAIDQVLPEESQKAESQNTFEETELELKKCFPSDETCEKPVDETTKLTQTSSTEQLNVLETETEVLNKEAVEVKGGGDVLEPVSSDSLSTKDFAAVEEVAPAKPPRHLTPEPDIVASTKKPVPARPPPPTNFPPPRPPPPSRPAPPPRKRKSELEFETLKTPDIDVPKENITSDSLLTASMASESTVKDSQPSLDLASATSGDKIVTAQENGKAPDGQTVAGEVMGPQRPRSNSGRELTDEEILASVMIKNLDTGEEIPLSLAEEKLPTGINPLTLHIMRRTKEYVSNDAAQSDDEEKLQSQPTDTDGGRLKQKTTQLKKFLGKSVKRAKHLAEEYGERAINKVKSVRDEVFHTDQDDPSSSDDEGMPYTRPVKFKAAHGFKGPYDFDQIKVVQDLSGEHMGAVWTMKFSHCGRLLASAGQDNVVRIWALKNAFDYFNNMRMKYNTEGRVSPSPSQESLSSSKSDTDTGVCSGTDEDPDDKNAPFRQRPFCKYKGHTADLLDLSWSKNYFLLSSSMDKTVRLWHISRRECLCCFQHIDFVTAIAFHPRDDRYFLSGSLDGKLRLWNIPDKKVALWNEVDGQTKLITAANFCQNGKYAVIGTYDGRCIFYDTEHLKYHTQIHVRSTRGRNKVGRKITGIEPLPGENKILVTSNDSRIRLYDLRDLSLSMKYKGYVNSSSQIKASFSHDFTYLVSGSEDKYVYIWSTYHDLSKFTSVRRDRNDFWEGIKAHNAVVTSAIFAPNPSLMLSLDVQSEKSEGNEKSEDAEVLDATPSGIMKTDNTEVLLSADFTGAIKVFVNKRKNVS.

Over residues 1–14 (MASESDTEEFYDAP) the composition is skewed to acidic residues. A disordered region spans residues 1–24 (MASESDTEEFYDAPEDVHLGGGYP). An N-acetylalanine modification is found at alanine 2. Positions 2 to 170 (ASESDTEEFY…SSTEQLNVLE (169 aa)) are binding activity. Phosphoserine is present on serine 3. An FFAT-like motif motif is present at residues 9-15 (EFYDAPE). Position 11 is a phosphotyrosine (tyrosine 11). Residues serine 27, serine 50, serine 66, serine 71, serine 81, serine 96, and serine 126 each carry the phosphoserine modification. A coiled-coil region spans residues 119–184 (EESQKAESQN…VLNKEAVEVK (66 aa)). Phosphothreonine occurs at positions 158 and 219. The disordered stretch occupies residues 205-348 (AVEEVAPAKP…RPRSNSGREL (144 aa)). The important for interaction with ARHGAP26 AND ARHGAP10 stretch occupies residues 211–257 (PAKPPRHLTPEPDIVASTKKPVPARPPPPTNFPPPRPPPPSRPAPPP). The segment covering 233–256 (PARPPPPTNFPPPRPPPPSRPAPP) has biased composition (pro residues). Phosphoserine is present on serine 262. Residues 262–278 (SELEFETLKTPDIDVPK) are compositionally biased toward basic and acidic residues. Threonine 271 bears the Phosphothreonine mark. Residues 280 to 311 (NITSDSLLTASMASESTVKDSQPSLDLASATS) are compositionally biased toward polar residues. The interval 334–347 (VMGPQRPRSNSGRE) is important for interaction with RAB11A. A phosphoserine; by PKB/AKT1 mark is found at serine 342 and serine 344. Threonine 349 carries the post-translational modification Phosphothreonine. Disordered stretches follow at residues 397 to 424 (SNDA…LKQK) and 459 to 480 (DEVF…MPYT). Serine 403, serine 470, serine 471, and serine 472 each carry phosphoserine. Residues 467-476 (DDPSSSDDEG) are compositionally biased toward acidic residues. Tyrosine 479 carries the post-translational modification Phosphotyrosine. Residues 509 to 548 (EHMGAVWTMKFSHCGRLLASAGQDNVVRIWALKNAFDYFN) form a WD 1 repeat. Positions 557-593 (EGRVSPSPSQESLSSSKSDTDTGVCSGTDEDPDDKNA) are disordered. A phosphoserine mark is found at serine 561 and serine 565. Residues 561–573 (SPSPSQESLSSSK) show a composition bias toward low complexity. WD repeat units lie at residues 605-643 (GHTA…CLCC), 645-685 (QHID…VALW), 690-729 (GQTK…YHTQ), 740-779 (KVGR…LSMK), 784-823 (VNSS…SKFT), and 876-913 (VLDA…KNVS).

In terms of assembly, interacts with the GTP-bound form of RAB11A and RAB11B. Interacts with GRAF1/ARHGAP26 or GRAF2/ARHGAP10; the interaction connects the endoplasmic reticulum (ER) with the endosomal tubule. Interacts (via FFAT-like motif) with VAPA (via MSP domain) or VAPB (via MSP domain); the interaction connects the ER with the endosomal tubule. Does not bind to RAB7, RAB10, RAB14, RAB35 and RAB8A. In terms of processing, phosphorylated by ATK1; the phosphorylation stabilizes its interaction with RAB11A and RAB11B.

The protein resides in the cytoplasm. It localises to the cytosol. The protein localises to the perinuclear region. It is found in the endosome membrane. Its subcellular location is the golgi apparatus. The protein resides in the trans-Golgi network. Its function is as follows. Downstream effector for Rab11 which regulates Rab11 intracellular membrane trafficking functions such as endocytic recycling, intracellular ciliogenesis and protein export. ATK1-mediated phosphorylation of WDR44 induces binding to Rab11 which activates endocytic recycling of transferrin receptor back to the plasma membrane. When bound to Rab11, prevents the formation of the ciliogenic Rab11-Rabin8/RAB3IP-RAB11FIP3 complex, therefore inhibiting preciliary trafficking and ciliogenesis. Participates in neo-synthesized protein export by connecting the endoplasmic reticulum (ER) with the endosomal tubule via direct interactions with the integral ER proteins VAPA or VAPB and the endosomal protein GRAFs (GRAF1/ARHGAP26 or GRAF2/ARHGAP10), which facilitates the transfer of proteins such as E-cadherin, MPP14 and CFTR into a Rab8-Rab10-Rab11-dependent export route. The sequence is that of WD repeat-containing protein 44 from Homo sapiens (Human).